Reading from the N-terminus, the 623-residue chain is Kelch repeat and BTB domain-containing protein 2 (623 aa).

The region spanning 31–98 is the BTB domain; the sequence is TDIVLIVEGT…AYTGNLAMND (68 aa). One can recognise a BACK domain in the interval 133 to 229; it reads CVRLLSFADL…IRIDALSEVT (97 aa). The residue at position 300 (serine 300) is a Phosphoserine. Kelch repeat units lie at residues 317–380, 381–429, 431–469, 470–529, and 535–581; these read DIYI…CCEG, YIYA…VVHD, IYVM…AFGD, KIFY…RAVV, and CVFM…DFRC.

Component of the BCR(KBTBD2) E3 ubiquitin ligase complex, at least composed of CUL3, KBTBD2 and RBX1. Interacts (via the BTB domain) with CUL3.

It functions in the pathway protein modification; protein ubiquitination. Substrate-specific adapter of a BCR (BTB-CUL3-RBX1) E3 ubiquitin ligase complex that acts as a regulator of the insulin signaling pathway, modulating insulin sensitivity by limiting PIK3R1/p85alpha abundance in adipocytes. Targets PIK3R1, the regulatory subunit of phosphatidylinositol 3-kinase (PI3K), for 'Lys-48'-linked polyubiquitination and proteasome-mediated degradation. This is Kelch repeat and BTB domain-containing protein 2 from Homo sapiens (Human).